We begin with the raw amino-acid sequence, 465 residues long: tRNA-2-methylthio-N(6)-dimethylallyladenosine synthase (465 aa).

An MTTase N-terminal domain is found at 26–141; the sequence is MRAHIITYGC…LPEALKANER (116 aa). Cys-35, Cys-71, Cys-104, Cys-173, Cys-177, and Cys-180 together coordinate [4Fe-4S] cluster. Positions 159 to 388 constitute a Radical SAM core domain; the sequence is PKGALSAHVT…IEKQKEWSYR (230 aa). In terms of domain architecture, TRAM spans 391 to 453; the sequence is LEWVGKTVEV…PHLLFGEVVG (63 aa).

The protein belongs to the methylthiotransferase family. MiaB subfamily. In terms of assembly, monomer. It depends on [4Fe-4S] cluster as a cofactor.

The protein localises to the cytoplasm. It catalyses the reaction N(6)-dimethylallyladenosine(37) in tRNA + (sulfur carrier)-SH + AH2 + 2 S-adenosyl-L-methionine = 2-methylsulfanyl-N(6)-dimethylallyladenosine(37) in tRNA + (sulfur carrier)-H + 5'-deoxyadenosine + L-methionine + A + S-adenosyl-L-homocysteine + 2 H(+). Its function is as follows. Catalyzes the methylthiolation of N6-(dimethylallyl)adenosine (i(6)A), leading to the formation of 2-methylthio-N6-(dimethylallyl)adenosine (ms(2)i(6)A) at position 37 in tRNAs that read codons beginning with uridine. The chain is tRNA-2-methylthio-N(6)-dimethylallyladenosine synthase from Thermus thermophilus (strain ATCC BAA-163 / DSM 7039 / HB27).